We begin with the raw amino-acid sequence, 102 residues long: Aspartyl/glutamyl-tRNA(Asn/Gln) amidotransferase subunit C (102 aa).

The protein belongs to the GatC family. Heterotrimer of A, B and C subunits.

It catalyses the reaction L-glutamyl-tRNA(Gln) + L-glutamine + ATP + H2O = L-glutaminyl-tRNA(Gln) + L-glutamate + ADP + phosphate + H(+). The enzyme catalyses L-aspartyl-tRNA(Asn) + L-glutamine + ATP + H2O = L-asparaginyl-tRNA(Asn) + L-glutamate + ADP + phosphate + 2 H(+). Allows the formation of correctly charged Asn-tRNA(Asn) or Gln-tRNA(Gln) through the transamidation of misacylated Asp-tRNA(Asn) or Glu-tRNA(Gln) in organisms which lack either or both of asparaginyl-tRNA or glutaminyl-tRNA synthetases. The reaction takes place in the presence of glutamine and ATP through an activated phospho-Asp-tRNA(Asn) or phospho-Glu-tRNA(Gln). The sequence is that of Aspartyl/glutamyl-tRNA(Asn/Gln) amidotransferase subunit C from Mycobacteroides abscessus (strain ATCC 19977 / DSM 44196 / CCUG 20993 / CIP 104536 / JCM 13569 / NCTC 13031 / TMC 1543 / L948) (Mycobacterium abscessus).